The sequence spans 289 residues: Acetyl-coenzyme A carboxylase carboxyl transferase subunit beta (289 aa).

Positions 34–289 constitute a CoA carboxyltransferase N-terminal domain; sequence MWVKCNKCGD…KLINMHQNSF (256 aa). Zn(2+)-binding residues include cysteine 38, cysteine 41, cysteine 57, and cysteine 60. Residues 38–60 form a C4-type zinc finger; sequence CNKCGDILYQNDLEKNYMVCNLC.

The protein belongs to the AccD/PCCB family. Acetyl-CoA carboxylase is a heterohexamer composed of biotin carboxyl carrier protein (AccB), biotin carboxylase (AccC) and two subunits each of ACCase subunit alpha (AccA) and ACCase subunit beta (AccD). It depends on Zn(2+) as a cofactor.

It localises to the cytoplasm. It catalyses the reaction N(6)-carboxybiotinyl-L-lysyl-[protein] + acetyl-CoA = N(6)-biotinyl-L-lysyl-[protein] + malonyl-CoA. The protein operates within lipid metabolism; malonyl-CoA biosynthesis; malonyl-CoA from acetyl-CoA: step 1/1. Component of the acetyl coenzyme A carboxylase (ACC) complex. Biotin carboxylase (BC) catalyzes the carboxylation of biotin on its carrier protein (BCCP) and then the CO(2) group is transferred by the transcarboxylase to acetyl-CoA to form malonyl-CoA. The chain is Acetyl-coenzyme A carboxylase carboxyl transferase subunit beta from Clostridium botulinum (strain Langeland / NCTC 10281 / Type F).